The sequence spans 152 residues: 6,7-dimethyl-8-ribityllumazine synthase (152 aa).

5-amino-6-(D-ribitylamino)uracil is bound by residues F24, 56 to 58 (SFE), and 80 to 82 (VVV). 85–86 (ET) lines the (2S)-2-hydroxy-3-oxobutyl phosphate pocket. The Proton donor role is filled by H88. F113 contacts 5-amino-6-(D-ribitylamino)uracil. R127 is a binding site for (2S)-2-hydroxy-3-oxobutyl phosphate.

It belongs to the DMRL synthase family.

It catalyses the reaction (2S)-2-hydroxy-3-oxobutyl phosphate + 5-amino-6-(D-ribitylamino)uracil = 6,7-dimethyl-8-(1-D-ribityl)lumazine + phosphate + 2 H2O + H(+). The protein operates within cofactor biosynthesis; riboflavin biosynthesis; riboflavin from 2-hydroxy-3-oxobutyl phosphate and 5-amino-6-(D-ribitylamino)uracil: step 1/2. Functionally, catalyzes the formation of 6,7-dimethyl-8-ribityllumazine by condensation of 5-amino-6-(D-ribitylamino)uracil with 3,4-dihydroxy-2-butanone 4-phosphate. This is the penultimate step in the biosynthesis of riboflavin. The protein is 6,7-dimethyl-8-ribityllumazine synthase of Thermococcus onnurineus (strain NA1).